The primary structure comprises 158 residues: Ribosome maturation factor RimP (158 aa).

The protein belongs to the RimP family.

It localises to the cytoplasm. Required for maturation of 30S ribosomal subunits. This Streptococcus suis (strain 98HAH33) protein is Ribosome maturation factor RimP.